Reading from the N-terminus, the 1241-residue chain is ATP-dependent helicase/nuclease subunit A (1241 aa).

The region spanning serine 12–arginine 485 is the UvrD-like helicase ATP-binding domain. Alanine 33–threonine 40 is a binding site for ATP. The UvrD-like helicase C-terminal domain maps to glycine 505 to glycine 805.

It belongs to the helicase family. AddA subfamily. In terms of assembly, heterodimer of AddA and AddB/RexB. Mg(2+) is required as a cofactor.

The catalysed reaction is Couples ATP hydrolysis with the unwinding of duplex DNA by translocating in the 3'-5' direction.. It carries out the reaction ATP + H2O = ADP + phosphate + H(+). Functionally, the heterodimer acts as both an ATP-dependent DNA helicase and an ATP-dependent, dual-direction single-stranded exonuclease. Recognizes the chi site generating a DNA molecule suitable for the initiation of homologous recombination. The AddA nuclease domain is required for chi fragment generation; this subunit has the helicase and 3' -&gt; 5' nuclease activities. The sequence is that of ATP-dependent helicase/nuclease subunit A from Bacillus cereus (strain ZK / E33L).